The primary structure comprises 217 residues: Adenylate kinase (217 aa).

10–15 contacts ATP; it reads GAGKGT. Positions 30–59 are NMP; that stretch reads STGDMLRAAVKAGTEMGLAAKKVMDAGGLV. Residues threonine 31, arginine 36, 57–59, 85–88, and glutamine 92 contribute to the AMP site; these read GLV and GFPR. Residues 122–159 are LID; sequence GRRSHPASGRTYHVKFNPPKVDGVDDVTGEPLVQRDDD. ATP is bound by residues arginine 123 and 132 to 133; that span reads TY. The AMP site is built by arginine 156 and arginine 167. Glycine 203 is an ATP binding site.

This sequence belongs to the adenylate kinase family. Monomer.

It is found in the cytoplasm. The enzyme catalyses AMP + ATP = 2 ADP. Its pathway is purine metabolism; AMP biosynthesis via salvage pathway; AMP from ADP: step 1/1. Catalyzes the reversible transfer of the terminal phosphate group between ATP and AMP. Plays an important role in cellular energy homeostasis and in adenine nucleotide metabolism. The sequence is that of Adenylate kinase from Leptothrix cholodnii (strain ATCC 51168 / LMG 8142 / SP-6) (Leptothrix discophora (strain SP-6)).